The chain runs to 224 residues: UPF0758 protein Maqu_3564 (224 aa).

Residues 102–224 (PLRSPADTRR…VISLAERGLM (123 aa)) enclose the MPN domain. The Zn(2+) site is built by histidine 173, histidine 175, and aspartate 186. Residues 173 to 186 (HNHPSGVAEPSQAD) carry the JAMM motif motif.

This sequence belongs to the UPF0758 family.

The polypeptide is UPF0758 protein Maqu_3564 (Marinobacter nauticus (strain ATCC 700491 / DSM 11845 / VT8) (Marinobacter aquaeolei)).